We begin with the raw amino-acid sequence, 393 residues long: tRNA (guanine-N(7)-)-methyltransferase (393 aa).

3 residues coordinate S-adenosyl-L-methionine: E124, E149, and D176. Substrate is bound at residue D232.

The protein belongs to the class I-like SAM-binding methyltransferase superfamily. TrmB family.

The catalysed reaction is guanosine(46) in tRNA + S-adenosyl-L-methionine = N(7)-methylguanosine(46) in tRNA + S-adenosyl-L-homocysteine. Its pathway is tRNA modification; N(7)-methylguanine-tRNA biosynthesis. Catalyzes the formation of N(7)-methylguanine at position 46 (m7G46) in tRNA. In Helicobacter pylori (strain ATCC 700392 / 26695) (Campylobacter pylori), this protein is tRNA (guanine-N(7)-)-methyltransferase.